The following is an 813-amino-acid chain: MPSIRAPAAKKTTTLTVAVKCRPLMEKERGRDIVRVNNSKEVVVLDPDLSKDYLDRIQNRTKEKKYCFDHAFGPESTNKNVYRSMSSVISSVVHGLNATVFAYGSTGSGKTYTMVGTRSDPGLMVLSLNTIFDMIKSDKSSDEFEVTCSYLEVYNEVIYDLLEKSSGHLELREDPEQGIVVAGLRSIKVHSADRILELLNLGNSRRKTESTEMNGTSSRSHAVLEIAVKRRQKNQNQVMRGKLALVDLAGSERAAETNNGGQKLRDGANINRSLLALANCINALGKQHKKGLAYVPYRNSKLTRILKDGLSGNSQTVMVATISPADSQYHHTVNTLKYADRAKEIKTHIQKNIGTIDTHMSDYQRMIDNLQSEVSQLKTQLAEKESQLSIKPFERGVERELSWLDGLSHQISENVQDRINLQKALFELEETNLRNRTELQHLDDAIAKQATEKDVVEALSSRRQVILDNIRDNDEAGVNYQRDIEENEKHRCELQDMLNEAINNNGNKTYLHILNQYKLLGMGNTELQFEMAMRDQIIYNQREAQRNLWNLLMGLGVEEKQVFDLAAKQGITIEDWSSIALFPGLPYRKQTPSFIPANIPFVGHSYSKSSCTFQSYQDPSSKGQQWAPTPTLCREEHHSSYYFMRQEPPAFVNLRKSHDGWVGGSRPASRIDTGGNHRRVSYPQTVNNSSPRMASGPTFYQTPQREMLLNTTSPYSSPRVGLINGATTPSVQPFYGSPRAVTVRNGSYNTPLAPAAVSTKGARNQQRVFGTSPLSGTKGVKNSSYGQNSHTKLYRGGGTKGHSKGNNTQRQHQ.

The Kinesin motor domain maps to 14–345 (TLTVAVKCRP…LKYADRAKEI (332 aa)). 104-111 (GSTGSGKT) contacts ATP. The stretch at 349 to 391 (IQKNIGTIDTHMSDYQRMIDNLQSEVSQLKTQLAEKESQLSIK) forms a coiled coil. Disordered regions lie at residues 664 to 694 (GSRPASRIDTGGNHRRVSYPQTVNNSSPRMA) and 756 to 813 (AVST…RQHQ). 3 stretches are compositionally biased toward polar residues: residues 682-694 (YPQTVNNSSPRMA), 761-791 (GARNQQRVFGTSPLSGTKGVKNSSYGQNSHT), and 804-813 (KGNNTQRQHQ).

Belongs to the TRAFAC class myosin-kinesin ATPase superfamily. Kinesin family. KIN-8 subfamily.

The chain is Kinesin-like protein KIN-8B from Arabidopsis thaliana (Mouse-ear cress).